The sequence spans 172 residues: Trypsin inhibitor DE-3 (172 aa).

2 cysteine pairs are disulfide-bonded: Cys39–Cys83 and Cys132–Cys139.

This sequence belongs to the protease inhibitor I3 (leguminous Kunitz-type inhibitor) family.

Functionally, inhibition of trypsin. The sequence is that of Trypsin inhibitor DE-3 from Erythrina caffra (Kaffir tree).